Here is a 522-residue protein sequence, read N- to C-terminus: Peptide chain release factor 3 (522 aa).

The tr-type G domain occupies 10–277 (ASRKTFAIIS…TFVDFAPSPS (268 aa)). GTP contacts are provided by residues 19 to 26 (SHPDAGKT), 87 to 91 (DTPGH), and 141 to 144 (NKMD).

It belongs to the TRAFAC class translation factor GTPase superfamily. Classic translation factor GTPase family. PrfC subfamily.

Its subcellular location is the cytoplasm. Increases the formation of ribosomal termination complexes and stimulates activities of RF-1 and RF-2. It binds guanine nucleotides and has strong preference for UGA stop codons. It may interact directly with the ribosome. The stimulation of RF-1 and RF-2 is significantly reduced by GTP and GDP, but not by GMP. The chain is Peptide chain release factor 3 from Listeria monocytogenes serotype 4b (strain CLIP80459).